A 197-amino-acid chain; its full sequence is FMN-dependent NADH:quinone oxidoreductase (197 aa).

FMN contacts are provided by residues serine 10, 16-18 (SKS), and 96-99 (MYNF).

The protein belongs to the azoreductase type 1 family. As to quaternary structure, homodimer. Requires FMN as cofactor.

It catalyses the reaction 2 a quinone + NADH + H(+) = 2 a 1,4-benzosemiquinone + NAD(+). The enzyme catalyses N,N-dimethyl-1,4-phenylenediamine + anthranilate + 2 NAD(+) = 2-(4-dimethylaminophenyl)diazenylbenzoate + 2 NADH + 2 H(+). Quinone reductase that provides resistance to thiol-specific stress caused by electrophilic quinones. In terms of biological role, also exhibits azoreductase activity. Catalyzes the reductive cleavage of the azo bond in aromatic azo compounds to the corresponding amines. The sequence is that of FMN-dependent NADH:quinone oxidoreductase from Marinomonas sp. (strain MWYL1).